The chain runs to 32 residues: ilv operon leader peptide (32 aa).

The chain is ilv operon leader peptide (ilvL) from Edwardsiella tarda.